The following is an 849-amino-acid chain: Mechanosensitive ion channel protein 7 (849 aa).

Residues 1-49 (MEFRKPFKSHSSYKQIISTGDQNEKTKKKKKLANLDDGDIAKTQSSGSS) form a disordered region. Residues 9–21 (SHSSYKQIISTGD) are compositionally biased toward polar residues. 6 consecutive transmembrane segments (helical) span residues 231–251 (AITL…VLSL), 274–294 (LVLI…VFFI), 313–333 (TAVQ…FLFD), 344–364 (VLLL…LWLI), 606–626 (MISF…LEIA), and 642–662 (AFMF…LFII).

This sequence belongs to the MscS (TC 1.A.23) family.

Its subcellular location is the membrane. In terms of biological role, mechanosensitive channel that opens in response to stretch forces in the membrane lipid bilayer. In Arabidopsis thaliana (Mouse-ear cress), this protein is Mechanosensitive ion channel protein 7 (MSL7).